A 385-amino-acid polypeptide reads, in one-letter code: Glucose-fructose oxidoreductase domain-containing protein 2 (385 aa).

The first 25 residues, 1–25, serve as a signal peptide directing secretion; that stretch reads MKMLPGVGVFGTGSSARVLVPLLRA.

Belongs to the Gfo/Idh/MocA family.

It localises to the secreted. It is found in the extracellular space. The protein resides in the extracellular matrix. Its function is as follows. Promotes matrix assembly. This Bos taurus (Bovine) protein is Glucose-fructose oxidoreductase domain-containing protein 2 (GFOD2).